Reading from the N-terminus, the 118-residue chain is Large ribosomal subunit protein bL20 (118 aa).

This sequence belongs to the bacterial ribosomal protein bL20 family.

Its function is as follows. Binds directly to 23S ribosomal RNA and is necessary for the in vitro assembly process of the 50S ribosomal subunit. It is not involved in the protein synthesizing functions of that subunit. The polypeptide is Large ribosomal subunit protein bL20 (Clostridioides difficile (strain 630) (Peptoclostridium difficile)).